A 416-amino-acid chain; its full sequence is Serine/threonine transporter SstT (416 aa).

The next 9 membrane-spanning stretches (helical) occupy residues 14–34, 43–63, 82–102, 141–161, 192–212, 220–240, 298–318, 339–359, and 363–383; these read GSIVLQIMFGLVAGMALALLS, FLGTLFVKALKGVAPVLVFVL, VLVLYLVGTFLAALVGVVASF, ALATGNFIGILAWAAALGVAL, IGVFGLVADAIATTGFSALMG, LLGSMLFIALVVNPLIVFLAI, MAGAAITISVLSLAAVHTLGV, ASGVAGGSLLLIPLACSLFGI, and VAMQMVAVGFIIGVIQDSAET.

It belongs to the dicarboxylate/amino acid:cation symporter (DAACS) (TC 2.A.23) family.

The protein resides in the cell inner membrane. It carries out the reaction L-serine(in) + Na(+)(in) = L-serine(out) + Na(+)(out). It catalyses the reaction L-threonine(in) + Na(+)(in) = L-threonine(out) + Na(+)(out). Involved in the import of serine and threonine into the cell, with the concomitant import of sodium (symport system). In Laribacter hongkongensis (strain HLHK9), this protein is Serine/threonine transporter SstT.